The primary structure comprises 414 residues: Argininosuccinate synthase (414 aa).

ATP is bound by residues 15–23 and alanine 42; that span reads AYSGGLDTS. The L-citrulline site is built by tyrosine 93 and serine 98. Glycine 123 is an ATP binding site. Residues threonine 125, asparagine 129, and aspartate 130 each coordinate L-aspartate. Position 129 (asparagine 129) interacts with L-citrulline. The L-citrulline site is built by arginine 133, serine 182, serine 191, glutamate 267, and tyrosine 279.

The protein belongs to the argininosuccinate synthase family. Type 1 subfamily. As to quaternary structure, homotetramer.

The protein resides in the cytoplasm. It carries out the reaction L-citrulline + L-aspartate + ATP = 2-(N(omega)-L-arginino)succinate + AMP + diphosphate + H(+). The protein operates within amino-acid biosynthesis; L-arginine biosynthesis; L-arginine from L-ornithine and carbamoyl phosphate: step 2/3. The sequence is that of Argininosuccinate synthase from Deinococcus geothermalis (strain DSM 11300 / CIP 105573 / AG-3a).